Here is a 220-residue protein sequence, read N- to C-terminus: MNNQNVDDHNLLLISQLYPNVYTPLVPQQGGEAKPTRRRKRKSKSVVVAEEGENEGNGWFRKRKLSDEQVRMLEISFEDDHKLESERKDRLASELGLDPRQVAVWFQNRRARWKNKRVEDEYTKLKNAYETTVVEKCRLDSEVIHLKEQLYEAEREIQRLAKRVEGTLSNSPISSSVTIEANHTTPFFGDYDIGFDGEADENLLYSPDYIDGLDWMSQFM.

Positions 26–48 (VPQQGGEAKPTRRRKRKSKSVVV) are disordered. Positions 58–117 (GWFRKRKLSDEQVRMLEISFEDDHKLESERKDRLASELGLDPRQVAVWFQNRRARWKNKR) form a DNA-binding region, homeobox. The segment at 118–146 (VEDEYTKLKNAYETTVVEKCRLDSEVIHL) is leucine-zipper.

This sequence belongs to the HD-ZIP homeobox family. Class I subfamily. Widely expressed.

Its subcellular location is the nucleus. In terms of biological role, probable transcription factor. This Arabidopsis thaliana (Mouse-ear cress) protein is Homeobox-leucine zipper protein ATHB-21 (ATHB-21).